The following is a 403-amino-acid chain: Tyrosine--tRNA ligase (403 aa).

Residues 42–51 carry the 'HIGH' region motif; sequence PTAPDLHLGH. Residues 226–230 carry the 'KMSKS' region motif; that stretch reads KMSKS. Residue lysine 229 coordinates ATP. The 62-residue stretch at 339-400 folds into the S4 RNA-binding domain; that stretch reads LRLAGLLTAA…GKRNFARVSL (62 aa).

It belongs to the class-I aminoacyl-tRNA synthetase family. TyrS type 2 subfamily. As to quaternary structure, homodimer.

The protein resides in the cytoplasm. It carries out the reaction tRNA(Tyr) + L-tyrosine + ATP = L-tyrosyl-tRNA(Tyr) + AMP + diphosphate + H(+). Functionally, catalyzes the attachment of tyrosine to tRNA(Tyr) in a two-step reaction: tyrosine is first activated by ATP to form Tyr-AMP and then transferred to the acceptor end of tRNA(Tyr). The polypeptide is Tyrosine--tRNA ligase (Xanthomonas axonopodis pv. citri (strain 306)).